The chain runs to 22 residues: Phospholipase A2 (22 aa).

This sequence belongs to the phospholipase A2 family. Group II subfamily. The cofactor is Ca(2+). In terms of processing, seven disulfide bonds are present. As to expression, expressed by the venom gland.

The protein resides in the secreted. The catalysed reaction is a 1,2-diacyl-sn-glycero-3-phosphocholine + H2O = a 1-acyl-sn-glycero-3-phosphocholine + a fatty acid + H(+). Its function is as follows. Snake venom phospholipase A2 (PLA2) that inhibits neuromuscular transmission by blocking acetylcholine release from the nerve termini. PLA2 catalyzes the calcium-dependent hydrolysis of the 2-acyl groups in 3-sn-phosphoglycerides. The polypeptide is Phospholipase A2 (Daboia siamensis (Eastern Russel's viper)).